Here is an 80-residue protein sequence, read N- to C-terminus: Translational regulator CsrA (80 aa).

Belongs to the CsrA/RsmA family. Homodimer; the beta-strands of each monomer intercalate to form a hydrophobic core, while the alpha-helices form wings that extend away from the core.

It localises to the cytoplasm. Its function is as follows. A translational regulator that binds mRNA to regulate translation initiation and/or mRNA stability. Usually binds in the 5'-UTR at or near the Shine-Dalgarno sequence preventing ribosome-binding, thus repressing translation. Its main target seems to be the major flagellin gene, while its function is anatagonized by FliW. This chain is Translational regulator CsrA, found in Desulforamulus reducens (strain ATCC BAA-1160 / DSM 100696 / MI-1) (Desulfotomaculum reducens).